A 79-amino-acid chain; its full sequence is DNA-directed RNA polymerase subunit omega (79 aa).

The protein belongs to the RNA polymerase subunit omega family. In cyanobacteria the RNAP catalytic core is composed of 2 alpha, 1 beta, 1 beta', 1 gamma and 1 omega subunit. When a sigma factor is associated with the core the holoenzyme is formed, which can initiate transcription.

It carries out the reaction RNA(n) + a ribonucleoside 5'-triphosphate = RNA(n+1) + diphosphate. Promotes RNA polymerase assembly. Latches the N- and C-terminal regions of the beta' subunit thereby facilitating its interaction with the beta and alpha subunits. The polypeptide is DNA-directed RNA polymerase subunit omega (Synechococcus sp. (strain JA-3-3Ab) (Cyanobacteria bacterium Yellowstone A-Prime)).